The sequence spans 106 residues: Diptericin A (106 aa).

A signal peptide spans 1-19 (MQFTIAVALLCCAIASTLA). The propeptide at 20-23 (YPMP) is removed by a dipeptidylpeptidase.

Belongs to the attacin/sarcotoxin-2 family.

Its subcellular location is the secreted. Antimicrobial peptide required to resist Gram-negative bacterial infections, regulated by Dredd. The sequence is that of Diptericin A from Drosophila melanogaster (Fruit fly).